The primary structure comprises 729 residues: Catalase-peroxidase 1 (729 aa).

Positions W98–Y226 form a cross-link, tryptophyl-tyrosyl-methioninium (Trp-Tyr) (with M-252). The active-site Proton acceptor is H99. The segment at residues Y226–M252 is a cross-link (tryptophyl-tyrosyl-methioninium (Tyr-Met) (with W-98)). H267 contacts heme b.

The protein belongs to the peroxidase family. Peroxidase/catalase subfamily. As to quaternary structure, homodimer or homotetramer. Requires heme b as cofactor. Formation of the three residue Trp-Tyr-Met cross-link is important for the catalase, but not the peroxidase activity of the enzyme.

It carries out the reaction H2O2 + AH2 = A + 2 H2O. The catalysed reaction is 2 H2O2 = O2 + 2 H2O. Bifunctional enzyme with both catalase and broad-spectrum peroxidase activity. This Cellvibrio japonicus (strain Ueda107) (Pseudomonas fluorescens subsp. cellulosa) protein is Catalase-peroxidase 1.